The following is a 188-amino-acid chain: ATP synthase subunit b (188 aa).

A helical membrane pass occupies residues 19-39 (VYVLGATIVSFLVLFLFITYF).

Belongs to the ATPase B chain family. F-type ATPases have 2 components, F(1) - the catalytic core - and F(0) - the membrane proton channel. F(1) has five subunits: alpha(3), beta(3), gamma(1), delta(1), epsilon(1). F(0) has three main subunits: a(1), b(2) and c(10-14). The alpha and beta chains form an alternating ring which encloses part of the gamma chain. F(1) is attached to F(0) by a central stalk formed by the gamma and epsilon chains, while a peripheral stalk is formed by the delta and b chains.

It localises to the cell membrane. Functionally, f(1)F(0) ATP synthase produces ATP from ADP in the presence of a proton or sodium gradient. F-type ATPases consist of two structural domains, F(1) containing the extramembraneous catalytic core and F(0) containing the membrane proton channel, linked together by a central stalk and a peripheral stalk. During catalysis, ATP synthesis in the catalytic domain of F(1) is coupled via a rotary mechanism of the central stalk subunits to proton translocation. In terms of biological role, component of the F(0) channel, it forms part of the peripheral stalk, linking F(1) to F(0). The protein is ATP synthase subunit b of Mesomycoplasma hyopneumoniae (strain 7448) (Mycoplasma hyopneumoniae).